A 274-amino-acid polypeptide reads, in one-letter code: Phosphatidylglycerol--prolipoprotein diacylglyceryl transferase (274 aa).

Helical transmembrane passes span 22–42 (LSVR…MWLA), 61–81 (LLFY…VLFY), 96–116 (IWTG…AMVW), 125–145 (FFTV…VGRI), 177–197 (SQLY…NLFW), 204–224 (GAIS…VEFV), and 238–258 (ISMG…MIWV). R144 contacts a 1,2-diacyl-sn-glycero-3-phospho-(1'-sn-glycerol).

Belongs to the Lgt family.

It localises to the cell inner membrane. The enzyme catalyses L-cysteinyl-[prolipoprotein] + a 1,2-diacyl-sn-glycero-3-phospho-(1'-sn-glycerol) = an S-1,2-diacyl-sn-glyceryl-L-cysteinyl-[prolipoprotein] + sn-glycerol 1-phosphate + H(+). Its pathway is protein modification; lipoprotein biosynthesis (diacylglyceryl transfer). Its function is as follows. Catalyzes the transfer of the diacylglyceryl group from phosphatidylglycerol to the sulfhydryl group of the N-terminal cysteine of a prolipoprotein, the first step in the formation of mature lipoproteins. This chain is Phosphatidylglycerol--prolipoprotein diacylglyceryl transferase, found in Aeromonas hydrophila subsp. hydrophila (strain ATCC 7966 / DSM 30187 / BCRC 13018 / CCUG 14551 / JCM 1027 / KCTC 2358 / NCIMB 9240 / NCTC 8049).